The following is a 540-amino-acid chain: Putative F-box/LRR-repeat protein At5g41840 (540 aa).

The F-box domain maps to 13–61; that stretch reads GDRISGLPDALICHILSFLPTKEAASTTVLAKRWKPLLAFVPNLNFDDS. LRR repeat units lie at residues 80–105, 137–165, 189–214, 217–242, 254–282, 329–360, and 361–386; these read FMSFVDSVLALQAKTKTPLKRFHVKC, RNYCENSSFYSLPSKIFVSKTLVRLKIQF, YFKIETSMLNKLLSGCHALEELVLAN, WADSSEDEACHVSVSIPTLKRLNFCR, YEDYDEENINEGVSLSFDNPNLVYLEYSD, ILYLSDDTLEVLSCCRERIPVFDNLLELTIKT, and TPYVGWKSLPPLLKSCPSLETLVFEG.

The chain is Putative F-box/LRR-repeat protein At5g41840 from Arabidopsis thaliana (Mouse-ear cress).